The primary structure comprises 553 residues: Glucose-6-phosphate isomerase (553 aa).

Residues 164-165 (GS), 215-220 (SKTFTT), Gln-359, Glu-363, His-394, and Lys-516 each bind D-glucose 6-phosphate. Glu-363 functions as the Proton donor in the catalytic mechanism. Active-site residues include His-394 and Lys-516.

This sequence belongs to the GPI family. In terms of assembly, homodimer.

Its subcellular location is the cytoplasm. It is found in the cytosol. It carries out the reaction alpha-D-glucose 6-phosphate = beta-D-fructose 6-phosphate. Its pathway is carbohydrate degradation; glycolysis; D-glyceraldehyde 3-phosphate and glycerone phosphate from D-glucose: step 2/4. In the cytoplasm, catalyzes the conversion of glucose-6-phosphate to fructose-6-phosphate, the second step in glycolysis, and the reverse reaction during gluconeogenesis. This is Glucose-6-phosphate isomerase (pgiA) from Aspergillus oryzae (strain ATCC 42149 / RIB 40) (Yellow koji mold).